Here is a 462-residue protein sequence, read N- to C-terminus: A-type ATP synthase subunit B (462 aa).

Belongs to the ATPase alpha/beta chains family. As to quaternary structure, has multiple subunits with at least A(3), B(3), C, D, E, F, H, I and proteolipid K(x).

The protein resides in the cell membrane. Functionally, component of the A-type ATP synthase that produces ATP from ADP in the presence of a proton gradient across the membrane. The B chain is a regulatory subunit. The polypeptide is A-type ATP synthase subunit B (Pyrococcus abyssi (strain GE5 / Orsay)).